Reading from the N-terminus, the 296-residue chain is Phosphatidylcholine:diacylglycerol cholinephosphotransferase 2 (296 aa).

5 helical membrane-spanning segments follow: residues 83–103 (HWIP…EYTF), 136–156 (VLAA…GCTW), 165–182 (TIAA…GYST), 198–218 (PVGN…SMIA), and 250–270 (GHYT…DSLA). Catalysis depends on residues histidine 211, histidine 251, and aspartate 255.

This sequence belongs to the phosphatidylcholine:diacylglycerol cholinephosphotransferase family.

Its subcellular location is the membrane. Functionally, functions as a phosphatidylcholine:diacylglycerol cholinephosphotransferase that catalyzes the transfer of the phosphocholine headgroup from phosphatidylcholine (PC) to diacylglycerol, a major reaction for the transfer of 18:1 into phosphatidylcholine for desaturation and also for the reverse transfer of 18:2 and 18:3 into the triacylglycerols synthesis pathway. This is Phosphatidylcholine:diacylglycerol cholinephosphotransferase 2 from Arabidopsis thaliana (Mouse-ear cress).